We begin with the raw amino-acid sequence, 242 residues long: Probable proteasome subunit alpha type-7 (242 aa).

It belongs to the peptidase T1A family. In terms of assembly, the 26S proteasome consists of a 20S proteasome core and two 19S regulatory subunits. The 20S proteasome core is composed of 28 subunits that are arranged in four stacked rings, resulting in a barrel-shaped structure. The two end rings are each formed by seven alpha subunits, and the two central rings are each formed by seven beta subunits. The catalytic chamber with the active sites is on the inside of the barrel.

The protein localises to the cytoplasm. It localises to the nucleus. Functionally, the proteasome degrades poly-ubiquitinated proteins in the cytoplasm and in the nucleus. It is essential for the regulated turnover of proteins and for the removal of misfolded proteins. The proteasome is a multicatalytic proteinase complex that is characterized by its ability to cleave peptides with Arg, Phe, Tyr, Leu, and Glu adjacent to the leaving group at neutral or slightly basic pH. It has an ATP-dependent proteolytic activity. This Encephalitozoon cuniculi (strain GB-M1) (Microsporidian parasite) protein is Probable proteasome subunit alpha type-7 (PRE10).